The primary structure comprises 308 residues: Putative S-adenosyl-L-methionine-dependent methyltransferase MAB_4585c (308 aa).

Residues D131 and 160–161 (DL) contribute to the S-adenosyl-L-methionine site.

The protein belongs to the UPF0677 family.

Functionally, exhibits S-adenosyl-L-methionine-dependent methyltransferase activity. The sequence is that of Putative S-adenosyl-L-methionine-dependent methyltransferase MAB_4585c from Mycobacteroides abscessus (strain ATCC 19977 / DSM 44196 / CCUG 20993 / CIP 104536 / JCM 13569 / NCTC 13031 / TMC 1543 / L948) (Mycobacterium abscessus).